A 784-amino-acid polypeptide reads, in one-letter code: LPS-assembly protein LptD (784 aa).

The first 24 residues, 1-24 (MKKRIPTLLATMIATALYSQQGLA), serve as a signal peptide directing secretion. Intrachain disulfides connect Cys31/Cys724 and Cys173/Cys725.

The protein belongs to the LptD family. Component of the lipopolysaccharide transport and assembly complex. Interacts with LptE and LptA. Post-translationally, contains two intramolecular disulfide bonds.

The protein localises to the cell outer membrane. Functionally, together with LptE, is involved in the assembly of lipopolysaccharide (LPS) at the surface of the outer membrane. This is LPS-assembly protein LptD from Shigella dysenteriae serotype 1 (strain Sd197).